Consider the following 251-residue polypeptide: Ubiquinone/menaquinone biosynthesis C-methyltransferase UbiE (251 aa).

S-adenosyl-L-methionine-binding positions include T74, D95, and 123–124; that span reads NA.

It belongs to the class I-like SAM-binding methyltransferase superfamily. MenG/UbiE family.

It catalyses the reaction a 2-demethylmenaquinol + S-adenosyl-L-methionine = a menaquinol + S-adenosyl-L-homocysteine + H(+). The catalysed reaction is a 2-methoxy-6-(all-trans-polyprenyl)benzene-1,4-diol + S-adenosyl-L-methionine = a 5-methoxy-2-methyl-3-(all-trans-polyprenyl)benzene-1,4-diol + S-adenosyl-L-homocysteine + H(+). It functions in the pathway quinol/quinone metabolism; menaquinone biosynthesis; menaquinol from 1,4-dihydroxy-2-naphthoate: step 2/2. It participates in cofactor biosynthesis; ubiquinone biosynthesis. Functionally, methyltransferase required for the conversion of demethylmenaquinol (DMKH2) to menaquinol (MKH2) and the conversion of 2-polyprenyl-6-methoxy-1,4-benzoquinol (DDMQH2) to 2-polyprenyl-3-methyl-6-methoxy-1,4-benzoquinol (DMQH2). The protein is Ubiquinone/menaquinone biosynthesis C-methyltransferase UbiE of Shewanella baltica (strain OS223).